The following is a 184-amino-acid chain: Probable RNA 2'-phosphotransferase (184 aa).

It belongs to the KptA/TPT1 family.

Removes the 2'-phosphate from RNA via an intermediate in which the phosphate is ADP-ribosylated by NAD followed by a presumed transesterification to release the RNA and generate ADP-ribose 1''-2''-cyclic phosphate (APPR&gt;P). May function as an ADP-ribosylase. The chain is Probable RNA 2'-phosphotransferase from Rhodopirellula baltica (strain DSM 10527 / NCIMB 13988 / SH1).